A 911-amino-acid chain; its full sequence is Protein translocase subunit SecA (911 aa).

Residues Gln87, 105 to 109 (GEGKT), and Asp512 each bind ATP. The interval 861–880 (APGLGSEQLSEEGAEVAVAS) is disordered. 4 residues coordinate Zn(2+): Cys895, Cys897, Cys906, and His907.

The protein belongs to the SecA family. In terms of assembly, monomer and homodimer. Part of the essential Sec protein translocation apparatus which comprises SecA, SecYEG and auxiliary proteins SecDF-YajC and YidC. The cofactor is Zn(2+).

Its subcellular location is the cell inner membrane. It is found in the cytoplasm. The enzyme catalyses ATP + H2O + cellular proteinSide 1 = ADP + phosphate + cellular proteinSide 2.. In terms of biological role, part of the Sec protein translocase complex. Interacts with the SecYEG preprotein conducting channel. Has a central role in coupling the hydrolysis of ATP to the transfer of proteins into and across the cell membrane, serving both as a receptor for the preprotein-SecB complex and as an ATP-driven molecular motor driving the stepwise translocation of polypeptide chains across the membrane. The chain is Protein translocase subunit SecA from Pseudomonas putida (strain ATCC 47054 / DSM 6125 / CFBP 8728 / NCIMB 11950 / KT2440).